The sequence spans 329 residues: 4-hydroxythreonine-4-phosphate dehydrogenase (329 aa).

Residues histidine 136 and threonine 137 each coordinate substrate. A divalent metal cation contacts are provided by histidine 166, histidine 211, and histidine 266. Residues lysine 274, asparagine 283, and arginine 292 each contribute to the substrate site.

It belongs to the PdxA family. Homodimer. Requires Zn(2+) as cofactor. The cofactor is Mg(2+). It depends on Co(2+) as a cofactor.

The protein localises to the cytoplasm. It carries out the reaction 4-(phosphooxy)-L-threonine + NAD(+) = 3-amino-2-oxopropyl phosphate + CO2 + NADH. Its pathway is cofactor biosynthesis; pyridoxine 5'-phosphate biosynthesis; pyridoxine 5'-phosphate from D-erythrose 4-phosphate: step 4/5. Functionally, catalyzes the NAD(P)-dependent oxidation of 4-(phosphooxy)-L-threonine (HTP) into 2-amino-3-oxo-4-(phosphooxy)butyric acid which spontaneously decarboxylates to form 3-amino-2-oxopropyl phosphate (AHAP). The sequence is that of 4-hydroxythreonine-4-phosphate dehydrogenase from Pseudomonas syringae pv. tomato (strain ATCC BAA-871 / DC3000).